Reading from the N-terminus, the 38-residue chain is Potassium channel toxin alpha-KTx 2.10 (38 aa).

Cystine bridges form between cysteine 7-cysteine 29, cysteine 13-cysteine 34, and cysteine 17-cysteine 36.

Expressed by the venom gland.

The protein resides in the secreted. Its function is as follows. Blocks human voltage-gated potassium (Kv) channel Kv1.2/KCNA2. Does not inhibit human Kv1.1/KCNA1 at 100nM concentration. This Centruroides bonito (Scorpion) protein is Potassium channel toxin alpha-KTx 2.10.